Reading from the N-terminus, the 334-residue chain is Holliday junction branch migration complex subunit RuvB (334 aa).

The interval 1 to 182 (MNERMVDQSM…FGVHLRLEYY (182 aa)) is large ATPase domain (RuvB-L). ATP-binding positions include leucine 21, arginine 22, glycine 63, lysine 66, threonine 67, threonine 68, 129–131 (EDF), arginine 172, tyrosine 182, and arginine 219. A Mg(2+)-binding site is contributed by threonine 67. The segment at 183–253 (NESDLKEIII…TTKHALGLLQ (71 aa)) is small ATPAse domain (RuvB-S). The tract at residues 256–334 (QHGLDYIDHK…HFAKSNEERE (79 aa)) is head domain (RuvB-H). DNA-binding residues include arginine 292, arginine 311, and arginine 316.

This sequence belongs to the RuvB family. As to quaternary structure, homohexamer. Forms an RuvA(8)-RuvB(12)-Holliday junction (HJ) complex. HJ DNA is sandwiched between 2 RuvA tetramers; dsDNA enters through RuvA and exits via RuvB. An RuvB hexamer assembles on each DNA strand where it exits the tetramer. Each RuvB hexamer is contacted by two RuvA subunits (via domain III) on 2 adjacent RuvB subunits; this complex drives branch migration. In the full resolvosome a probable DNA-RuvA(4)-RuvB(12)-RuvC(2) complex forms which resolves the HJ.

The protein resides in the cytoplasm. It catalyses the reaction ATP + H2O = ADP + phosphate + H(+). Its function is as follows. The RuvA-RuvB-RuvC complex processes Holliday junction (HJ) DNA during genetic recombination and DNA repair, while the RuvA-RuvB complex plays an important role in the rescue of blocked DNA replication forks via replication fork reversal (RFR). RuvA specifically binds to HJ cruciform DNA, conferring on it an open structure. The RuvB hexamer acts as an ATP-dependent pump, pulling dsDNA into and through the RuvAB complex. RuvB forms 2 homohexamers on either side of HJ DNA bound by 1 or 2 RuvA tetramers; 4 subunits per hexamer contact DNA at a time. Coordinated motions by a converter formed by DNA-disengaged RuvB subunits stimulates ATP hydrolysis and nucleotide exchange. Immobilization of the converter enables RuvB to convert the ATP-contained energy into a lever motion, pulling 2 nucleotides of DNA out of the RuvA tetramer per ATP hydrolyzed, thus driving DNA branch migration. The RuvB motors rotate together with the DNA substrate, which together with the progressing nucleotide cycle form the mechanistic basis for DNA recombination by continuous HJ branch migration. Branch migration allows RuvC to scan DNA until it finds its consensus sequence, where it cleaves and resolves cruciform DNA. In Staphylococcus aureus (strain bovine RF122 / ET3-1), this protein is Holliday junction branch migration complex subunit RuvB.